Reading from the N-terminus, the 406-residue chain is Peptidase T (406 aa).

H81 is a binding site for Zn(2+). D83 is an active-site residue. Zn(2+) is bound at residue D142. Catalysis depends on E176, which acts as the Proton acceptor. Residues E177, D199, and H381 each coordinate Zn(2+).

This sequence belongs to the peptidase M20B family. Zn(2+) serves as cofactor.

It localises to the cytoplasm. It carries out the reaction Release of the N-terminal residue from a tripeptide.. Cleaves the N-terminal amino acid of tripeptides. The chain is Peptidase T from Streptococcus suis (strain 98HAH33).